We begin with the raw amino-acid sequence, 383 residues long: E3 ubiquitin-protein ligase SPL2 (383 aa).

The Cytoplasmic portion of the chain corresponds to 1 to 14; the sequence is MSSPERALLNLLTD. The helical transmembrane segment at 15–35 threads the bilayer; sequence IALSFDGAILGLTLAVSAVGS. The Chloroplast intermembrane segment spans residues 36–269; the sequence is ALKYASTNAA…MIEDLMEQTN (234 aa). A helical transmembrane segment spans residues 270 to 290; sequence FIFLGSVILGIVSVGILSYAA. At 291–383 the chain is on the cytoplasmic side; sequence VRTWNKWKQW…IRGSMRVYYS (93 aa). The RING-type zinc-finger motif lies at 331-370; that stretch reads CVICVSRRRVPAFIPCGHVVCCRRCASTVERELNPKCPVC.

The protein resides in the plastid. Its subcellular location is the chloroplast outer membrane. It catalyses the reaction S-ubiquitinyl-[E2 ubiquitin-conjugating enzyme]-L-cysteine + [acceptor protein]-L-lysine = [E2 ubiquitin-conjugating enzyme]-L-cysteine + N(6)-ubiquitinyl-[acceptor protein]-L-lysine.. The protein operates within protein modification; protein ubiquitination. Functionally, possesses E3 ubiquitin-protein ligase activity. The protein is E3 ubiquitin-protein ligase SPL2 of Arabidopsis thaliana (Mouse-ear cress).